The primary structure comprises 381 residues: L-lactate dehydrogenase (381 aa).

Residues 1–380 enclose the FMN hydroxy acid dehydrogenase domain; the sequence is MIISASTDYR…TRDSLVRELG (380 aa). Residue Tyr-24 participates in substrate binding. FMN is bound by residues Ser-106 and Gln-127. Tyr-129 contacts substrate. Thr-155 is a binding site for FMN. Arg-164 provides a ligand contact to substrate. Lys-251 contacts FMN. Catalysis depends on His-275, which acts as the Proton acceptor. Arg-278 is a binding site for substrate. 306 to 330 serves as a coordination point for FMN; sequence DSGIRSGLDVVRMIALGADTVLIGR.

This sequence belongs to the FMN-dependent alpha-hydroxy acid dehydrogenase family. Homotetramer. FMN serves as cofactor.

It localises to the cell inner membrane. The enzyme catalyses (S)-lactate + A = pyruvate + AH2. Functionally, catalyzes the conversion of L-lactate to pyruvate. Is coupled to the respiratory chain. In Pseudomonas putida (strain ATCC 700007 / DSM 6899 / JCM 31910 / BCRC 17059 / LMG 24140 / F1), this protein is L-lactate dehydrogenase.